A 218-amino-acid chain; its full sequence is Ribonuclease S-7 (218 aa).

The N-terminal stretch at 1-22 is a signal peptide; it reads MLNSPLTSVLFVLLFVLSPIYG. Gln32 is a binding site for RNA. An intrachain disulfide couples Cys38 to Cys43. A glycan (N-linked (GlcNAc...) asparagine) is linked at Asn49. His53 lines the RNA pocket. His53 (proton donor) is an active-site residue. Asn59 carries N-linked (GlcNAc...) asparagine glycosylation. Cysteines 67 and 116 form a disulfide. RNA contacts are provided by residues 91–92, Phe105, 108–109, and 112–113; these read DL, HE, and KH. The active site involves Glu109. His113 acts as the Proton acceptor in catalysis. Residue Asn162 is glycosylated (N-linked (GlcNAc...) asparagine). Cystine bridges form between Cys177/Cys207 and Cys190/Cys201.

This sequence belongs to the RNase T2 family.

It is found in the secreted. The protein localises to the extracellular space. It catalyses the reaction a ribonucleotidyl-ribonucleotide-RNA + H2O = a 3'-end 3'-phospho-ribonucleotide-RNA + a 5'-end dephospho-ribonucleoside-RNA + H(+). Self-incompatibility (SI) is the inherited ability of a flowering plant to prevent self-fertilization by discriminating between self and non-self pollen during pollination. In many species of the Solanaceae, self-incompatibility is controlled by the single, multiallelic locus S. This stylar glycoprotein is associated with expression of self-incompatibility in potato. This Nicotiana alata (Winged tobacco) protein is Ribonuclease S-7.